The primary structure comprises 187 residues: Peptidyl-tRNA hydrolase (187 aa).

Tyr15 provides a ligand contact to tRNA. The Proton acceptor role is filled by His20. 3 residues coordinate tRNA: Phe65, Asn67, and Asn113.

The protein belongs to the PTH family. In terms of assembly, monomer.

It localises to the cytoplasm. It carries out the reaction an N-acyl-L-alpha-aminoacyl-tRNA + H2O = an N-acyl-L-amino acid + a tRNA + H(+). In terms of biological role, hydrolyzes ribosome-free peptidyl-tRNAs (with 1 or more amino acids incorporated), which drop off the ribosome during protein synthesis, or as a result of ribosome stalling. Its function is as follows. Catalyzes the release of premature peptidyl moieties from peptidyl-tRNA molecules trapped in stalled 50S ribosomal subunits, and thus maintains levels of free tRNAs and 50S ribosomes. This is Peptidyl-tRNA hydrolase from Methylococcus capsulatus (strain ATCC 33009 / NCIMB 11132 / Bath).